The sequence spans 107 residues: Nucleoid-associated protein Pnec_0645 (107 aa).

The protein belongs to the YbaB/EbfC family. In terms of assembly, homodimer.

Its subcellular location is the cytoplasm. The protein resides in the nucleoid. In terms of biological role, binds to DNA and alters its conformation. May be involved in regulation of gene expression, nucleoid organization and DNA protection. This Polynucleobacter necessarius subsp. necessarius (strain STIR1) protein is Nucleoid-associated protein Pnec_0645.